A 121-amino-acid polypeptide reads, in one-letter code: Large ribosomal subunit protein bL12 (121 aa).

The protein belongs to the bacterial ribosomal protein bL12 family. In terms of assembly, homodimer. Part of the ribosomal stalk of the 50S ribosomal subunit. Forms a multimeric L10(L12)X complex, where L10 forms an elongated spine to which 2 to 4 L12 dimers bind in a sequential fashion. Binds GTP-bound translation factors.

Functionally, forms part of the ribosomal stalk which helps the ribosome interact with GTP-bound translation factors. Is thus essential for accurate translation. The chain is Large ribosomal subunit protein bL12 from Psychromonas ingrahamii (strain DSM 17664 / CCUG 51855 / 37).